The chain runs to 426 residues: Histidinol dehydrogenase (426 aa).

NAD(+) is bound by residues tyrosine 125, glutamine 187, and asparagine 210. The substrate site is built by serine 233, glutamine 255, and histidine 258. The Zn(2+) site is built by glutamine 255 and histidine 258. Active-site proton acceptor residues include glutamate 323 and histidine 324. Positions 324, 357, 411, and 416 each coordinate substrate. Position 357 (aspartate 357) interacts with Zn(2+). Residue histidine 416 participates in Zn(2+) binding.

Belongs to the histidinol dehydrogenase family. It depends on Zn(2+) as a cofactor.

It catalyses the reaction L-histidinol + 2 NAD(+) + H2O = L-histidine + 2 NADH + 3 H(+). It participates in amino-acid biosynthesis; L-histidine biosynthesis; L-histidine from 5-phospho-alpha-D-ribose 1-diphosphate: step 9/9. Functionally, catalyzes the sequential NAD-dependent oxidations of L-histidinol to L-histidinaldehyde and then to L-histidine. The protein is Histidinol dehydrogenase (hisD) of Methanothermobacter thermautotrophicus (strain ATCC 29096 / DSM 1053 / JCM 10044 / NBRC 100330 / Delta H) (Methanobacterium thermoautotrophicum).